Here is a 127-residue protein sequence, read N- to C-terminus: Large ribosomal subunit protein eL32 (127 aa).

Positions 37-48 (KWRKPKGTDSKM) are enriched in basic and acidic residues. Residues 37 to 65 (KWRKPKGTDSKMRVKLKGKARSPSIGWSS) form a disordered region.

It belongs to the eukaryotic ribosomal protein eL32 family.

This is Large ribosomal subunit protein eL32 from Thermococcus sibiricus (strain DSM 12597 / MM 739).